We begin with the raw amino-acid sequence, 560 residues long: Choline/ethanolamine transporter FLVCR1 (560 aa).

Residues 1-22 are disordered; that stretch reads MVKLNDEEGAAMAPGHQPTNGY. The Cytoplasmic segment spans residues 1-99; the sequence is MVKLNDEEGA…TPGTEGSPAP (99 aa). Ser-56 carries the phosphoserine modification. The disordered stretch occupies residues 68–99; the sequence is QTPLAPEEETQTRLLPTGPGEETPGTEGSPAP. The span at 83 to 95 shows a compositional bias: low complexity; that stretch reads PTGPGEETPGTEG. A helical transmembrane segment spans residues 100–124; sequence QTALSARRFVVLLIFSLYSLVNAFQ. The Extracellular portion of the chain corresponds to 125–142; sequence WIQYSVISNVFEGFYGVS. The chain crosses the membrane as a helical span at residues 143–170; sequence SLHIDWLSMVYMLAYVPLIFPATWLLDT. Over 171–172 the chain is Cytoplasmic; that stretch reads RG. A helical membrane pass occupies residues 173–192; sequence LRLTALLGSGLNCLGAWVKC. Topologically, residues 193–199 are extracellular; it reads ASVQQHL. A helical membrane pass occupies residues 200–228; that stretch reads FWVTMLGQCLCSVAQVFILGLPSRIASVW. Gln-214 contacts ethanolamine. Over 229–233 the chain is Cytoplasmic; sequence FGPKE. The chain crosses the membrane as a helical span at residues 234-259; sequence VSTACATAVLGNQLGAAIGFLLPPVL. Over 260–265 the chain is Extracellular; it reads VPNTQN. Asn-265 is a glycosylation site (N-linked (GlcNAc...) asparagine). A helical transmembrane segment spans residues 266–295; sequence NTDLLACNISTMFYGTSSVATFLCFLTIIA. The Cytoplasmic segment spans residues 296–331; it reads FKEKPQYPPSQAQAALQNSPPAKYSYKKSIRNLFRN. Residues 332 to 362 form a helical membrane-spanning segment; sequence VPFVLLLITYGIITGAFYSVSTLLNQMILTY. Residues 363 to 366 lie on the Extracellular side of the membrane; sequence YKGE. Residues 367-395 form a helical membrane-spanning segment; it reads EVSAGKIGLTLVVAGMVGSILCGFWLDYT. The Cytoplasmic segment spans residues 396 to 397; that stretch reads KI. The chain crosses the membrane as a helical span at residues 398–420; sequence YKQTTLIVYILSFLGMVIFTFTL. Over 421–423 the chain is Extracellular; the sequence is DLG. Residues 424-453 traverse the membrane as a helical segment; it reads YGIVVFVTGGVLGFFMTGYLPLGFEFAVEI. Topologically, residues 454–461 are cytoplasmic; sequence TYPESEGT. Residues 462–487 traverse the membrane as a helical segment; sequence SSGLLNAAAQIFGILFTLAQGKLTTD. Residue Gln-471 participates in ethanolamine binding. Residue Gln-471 participates in choline binding. At 488-489 the chain is on the extracellular side; the sequence is YS. Residues 490–512 form a helical membrane-spanning segment; it reads PKAGNIFLCVWLFLGIILTALIK. The Cytoplasmic segment spans residues 513-560; it reads SDLRRHNINIGIANGDIKAVPVEDTVEDSPTDKESKTIVMSKQSESAI. The interval 537-560 is disordered; sequence TVEDSPTDKESKTIVMSKQSESAI. Ser-541 carries the post-translational modification Phosphoserine. Residues 550–560 are compositionally biased toward polar residues; the sequence is IVMSKQSESAI.

Belongs to the major facilitator superfamily. Feline leukemia virus subgroup C receptor (TC 2.A.1.28.1) family.

Its subcellular location is the cell membrane. The enzyme catalyses choline(out) = choline(in). It carries out the reaction ethanolamine(in) = ethanolamine(out). It catalyses the reaction heme b(in) = heme b(out). Functionally, uniporter that mediates the transport of extracellular choline and ethanolamine into cells, thereby playing a key role in phospholipid biosynthesis. Choline and ethanolamine are the precursors of phosphatidylcholine and phosphatidylethanolamine, respectively, the two most abundant phospholipids. Transport is not coupled with proton transport and is exclusively driven by the choline (or ethanolamine) gradient across the plasma membrane. Also acts as a heme b transporter that mediates heme efflux from the cytoplasm to the extracellular compartment. (Microbial infection) Confers susceptibility to Feline leukemia virus subgroup C (FeLV-C) infection, which is associated with fatal erythroid aplasia, also known as aplastic anemia. This is Choline/ethanolamine transporter FLVCR1 (FLVCR1) from Felis catus (Cat).